A 393-amino-acid polypeptide reads, in one-letter code: Lipoyl synthase, mitochondrial (393 aa).

Residues cysteine 115, cysteine 120, cysteine 126, cysteine 146, cysteine 150, cysteine 153, and serine 362 each contribute to the [4Fe-4S] cluster site. The region spanning 131 to 351 (ETGTATATIM…RILGMDMGFR (221 aa)) is the Radical SAM core domain.

The protein belongs to the radical SAM superfamily. Lipoyl synthase family. The cofactor is [4Fe-4S] cluster.

It localises to the mitochondrion. It catalyses the reaction [[Fe-S] cluster scaffold protein carrying a second [4Fe-4S](2+) cluster] + N(6)-octanoyl-L-lysyl-[protein] + 2 oxidized [2Fe-2S]-[ferredoxin] + 2 S-adenosyl-L-methionine + 4 H(+) = [[Fe-S] cluster scaffold protein] + N(6)-[(R)-dihydrolipoyl]-L-lysyl-[protein] + 4 Fe(3+) + 2 hydrogen sulfide + 2 5'-deoxyadenosine + 2 L-methionine + 2 reduced [2Fe-2S]-[ferredoxin]. The protein operates within protein modification; protein lipoylation via endogenous pathway; protein N(6)-(lipoyl)lysine from octanoyl-[acyl-carrier-protein]: step 2/2. Catalyzes the radical-mediated insertion of two sulfur atoms into the C-6 and C-8 positions of the octanoyl moiety bound to the lipoyl domains of lipoate-dependent enzymes, thereby converting the octanoylated domains into lipoylated derivatives. The polypeptide is Lipoyl synthase, mitochondrial (Vitis vinifera (Grape)).